A 581-amino-acid chain; its full sequence is Adenine deaminase (581 aa).

This sequence belongs to the metallo-dependent hydrolases superfamily. Adenine deaminase family. It depends on Mn(2+) as a cofactor.

It catalyses the reaction adenine + H2O + H(+) = hypoxanthine + NH4(+). This is Adenine deaminase from Clostridium botulinum (strain Eklund 17B / Type B).